The sequence spans 556 residues: HIRA-interacting protein 3 (556 aa).

Serine 27 carries the phosphoserine modification. Basic and acidic residues predominate over residues 64–77 (DEAASREDKLDLTK). The interval 64 to 426 (DEAASREDKL…GRRGEDHPAV (363 aa)) is disordered. Threonine 84 is subject to Phosphothreonine. Phosphoserine is present on residues serine 87, serine 98, serine 100, serine 125, serine 142, serine 143, serine 159, and serine 160. Positions 99-108 (ESESGSEASS) are enriched in low complexity. Positions 126-158 (PAKEENPRRASKAVEESSDEERQRDLPAQRGEE) are enriched in basic and acidic residues. Over residues 168 to 177 (KGKTRKKPVV) the composition is skewed to basic residues. Serine 196, serine 199, serine 223, and serine 227 each carry phosphoserine. Positions 209–224 (KKVEGNKGTKSLKESE) are enriched in basic and acidic residues. A compositionally biased stretch (acidic residues) spans 240 to 254 (EEEVEEEEKEEDEEK). Residues 260 to 269 (RTRSNGRRKS) show a composition bias toward basic residues. A phosphoserine mark is found at serine 289 and serine 291. A compositionally biased stretch (basic and acidic residues) spans 304–322 (DSGRDREPPVQRKSEDRTQ). Phosphoserine occurs at positions 330, 332, 333, and 357. Threonine 358 carries the phosphothreonine modification. Residues serine 359, serine 363, serine 370, and serine 372 each carry the phosphoserine modification. The segment covering 385–396 (RSSKKSSRKGRT) has biased composition (basic residues). The interaction with the histone H2A-H2B complex stretch occupies residues 403 to 527 (SDGSPEAKGG…APPGELYRRT (125 aa)). Position 471 is a phosphothreonine (threonine 471). A disordered region spans residues 502–556 (SGRPRRRTAWNPLGEAAPPGELYRRTLDSDEERPRPAPPDWSHMRGIISSDGESN). Positions 523 to 536 (LYRRTLDSDEERPR) are enriched in basic and acidic residues. Phosphoserine is present on residues serine 530, serine 550, serine 551, and serine 555.

As to quaternary structure, interacts (via C-terminus) with histone H2A-H2B dimers; the interaction is direct. Interacts with HIRA. Interacts with CK2. In terms of processing, phosphorylated by CK2. Widely expressed. Isoform 1 is predominant in skeletal muscle. Isoform 2 is predominant in liver and heart.

It is found in the nucleus. Its function is as follows. Histone chaperone that carries a H2A-H2B histone complex and facilitates its deposition onto chromatin. This Homo sapiens (Human) protein is HIRA-interacting protein 3 (HIRIP3).